The chain runs to 451 residues: Eukaryotic translation initiation factor 3 subunit E (451 aa).

The PCI domain maps to 256 to 425 (TDLFFSPAYI…GTVIMNHPPQ (170 aa)).

The protein belongs to the eIF-3 subunit E family. Component of the eukaryotic translation initiation factor 3 (eIF-3) complex.

It localises to the cytoplasm. In terms of biological role, component of the eukaryotic translation initiation factor 3 (eIF-3) complex, which is involved in protein synthesis of a specialized repertoire of mRNAs and, together with other initiation factors, stimulates binding of mRNA and methionyl-tRNAi to the 40S ribosome. The eIF-3 complex specifically targets and initiates translation of a subset of mRNAs involved in cell proliferation. The sequence is that of Eukaryotic translation initiation factor 3 subunit E (int6) from Aspergillus fumigatus (strain CBS 144.89 / FGSC A1163 / CEA10) (Neosartorya fumigata).